The chain runs to 112 residues: uncharacterized protein (112 aa).

To Buchnera BUsg564.

This is an uncharacterized protein from Buchnera aphidicola subsp. Acyrthosiphon pisum (strain APS) (Acyrthosiphon pisum symbiotic bacterium).